The following is a 292-amino-acid chain: Acetylglutamate kinase (292 aa).

Residues 64–65 (GG), arginine 86, and asparagine 190 contribute to the substrate site.

Belongs to the acetylglutamate kinase family. ArgB subfamily.

It is found in the cytoplasm. It catalyses the reaction N-acetyl-L-glutamate + ATP = N-acetyl-L-glutamyl 5-phosphate + ADP. It participates in amino-acid biosynthesis; L-arginine biosynthesis; N(2)-acetyl-L-ornithine from L-glutamate: step 2/4. Its function is as follows. Catalyzes the ATP-dependent phosphorylation of N-acetyl-L-glutamate. In Geotalea daltonii (strain DSM 22248 / JCM 15807 / FRC-32) (Geobacter daltonii), this protein is Acetylglutamate kinase.